The sequence spans 158 residues: Methylglyoxal synthase (158 aa).

An MGS-like domain is found at 1–158 (MRRKLRIALV…AFEESLKVKE (158 aa)). Substrate-binding positions include His12, Lys16, 38 to 41 (TGTT), and 63 to 64 (SG). Asp69 acts as the Proton donor/acceptor in catalysis. Position 96 (His96) interacts with substrate.

The protein belongs to the methylglyoxal synthase family.

The enzyme catalyses dihydroxyacetone phosphate = methylglyoxal + phosphate. In terms of biological role, catalyzes the formation of methylglyoxal from dihydroxyacetone phosphate. The polypeptide is Methylglyoxal synthase (Treponema socranskii).